The primary structure comprises 157 residues: MSGVAGGASKKSSSRTMATKKLIIDEFKRRLRDNIKSLNDNFFHIIQAAKVNPDDNAYKNQTGKMTEFYTTKNEMAVRAQLMVRASDELLKLTADLKEFLILHDFHFLTHNIKQAEAQCEETLRQQSHQHNCLDSEVSNILFDLEREIAENFYLRHT.

Belongs to the Mediator complex subunit 22 family. Component of the Mediator complex.

It localises to the nucleus. Component of the Mediator complex, a coactivator involved in the regulated transcription of nearly all RNA polymerase II-dependent genes. Mediator functions as a bridge to convey information from gene-specific regulatory proteins to the basal RNA polymerase II transcription machinery. Mediator is recruited to promoters by direct interactions with regulatory proteins and serves as a scaffold for the assembly of a functional preinitiation complex with RNA polymerase II and the general transcription factors. The polypeptide is Mediator of RNA polymerase II transcription subunit 22 (mdt-22) (Caenorhabditis elegans).